Reading from the N-terminus, the 89-residue chain is Small ribosomal subunit protein uS17 (89 aa).

The protein belongs to the universal ribosomal protein uS17 family. In terms of assembly, part of the 30S ribosomal subunit.

Its function is as follows. One of the primary rRNA binding proteins, it binds specifically to the 5'-end of 16S ribosomal RNA. This chain is Small ribosomal subunit protein uS17, found in Bdellovibrio bacteriovorus (strain ATCC 15356 / DSM 50701 / NCIMB 9529 / HD100).